The following is a 119-amino-acid chain: NADH-quinone oxidoreductase subunit A (119 aa).

A run of 3 helical transmembrane segments spans residues 7–27, 63–83, and 88–108; these read YPVLLFLLVGTGLGIALVSIG, LVAILFIIFDLETAFLFPWGV, and IGWPGFIAMMIFLLEFLLGFA.

Belongs to the complex I subunit 3 family. As to quaternary structure, NDH-1 is composed of 14 different subunits. Subunits NuoA, H, J, K, L, M, N constitute the membrane sector of the complex.

It is found in the cell inner membrane. The catalysed reaction is a quinone + NADH + 5 H(+)(in) = a quinol + NAD(+) + 4 H(+)(out). NDH-1 shuttles electrons from NADH, via FMN and iron-sulfur (Fe-S) centers, to quinones in the respiratory chain. The immediate electron acceptor for the enzyme in this species is believed to be ubiquinone. Couples the redox reaction to proton translocation (for every two electrons transferred, four hydrogen ions are translocated across the cytoplasmic membrane), and thus conserves the redox energy in a proton gradient. In Burkholderia ambifaria (strain MC40-6), this protein is NADH-quinone oxidoreductase subunit A.